A 180-amino-acid polypeptide reads, in one-letter code: Nucleoside triphosphate/diphosphate phosphatase (180 aa).

The active-site Proton donor is the Arg26. Residues Asn90, Asp106, Asp108, Asp110, Asp123, and Glu126 each coordinate Mg(2+).

It belongs to the Ntdp family. The cofactor is Mg(2+).

It carries out the reaction a ribonucleoside 5'-triphosphate + H2O = a ribonucleoside 5'-diphosphate + phosphate + H(+). The enzyme catalyses a ribonucleoside 5'-diphosphate + H2O = a ribonucleoside 5'-phosphate + phosphate + H(+). Has nucleoside phosphatase activity towards nucleoside triphosphates and nucleoside diphosphates. The sequence is that of Nucleoside triphosphate/diphosphate phosphatase from Staphylococcus aureus (strain MRSA252).